We begin with the raw amino-acid sequence, 366 residues long: 3-dehydroquinate synthase (366 aa).

NAD(+) contacts are provided by residues 69–74 (DGEAFK), 103–107 (GVIGD), 127–128 (TT), Lys140, and Lys149. 3 residues coordinate Zn(2+): Glu182, His245, and His262.

It belongs to the sugar phosphate cyclases superfamily. Dehydroquinate synthase family. Co(2+) is required as a cofactor. The cofactor is Zn(2+). NAD(+) serves as cofactor.

It localises to the cytoplasm. The enzyme catalyses 7-phospho-2-dehydro-3-deoxy-D-arabino-heptonate = 3-dehydroquinate + phosphate. It functions in the pathway metabolic intermediate biosynthesis; chorismate biosynthesis; chorismate from D-erythrose 4-phosphate and phosphoenolpyruvate: step 2/7. In terms of biological role, catalyzes the conversion of 3-deoxy-D-arabino-heptulosonate 7-phosphate (DAHP) to dehydroquinate (DHQ). This chain is 3-dehydroquinate synthase, found in Pseudomonas fluorescens (strain Pf0-1).